An 88-amino-acid chain; its full sequence is Large ribosomal subunit protein bL27 (88 aa).

The interval 1–26 (MAHKKGASSSSNGRDSEAKRLGVKRF) is disordered.

This sequence belongs to the bacterial ribosomal protein bL27 family.

The sequence is that of Large ribosomal subunit protein bL27 from Corynebacterium glutamicum (strain R).